The following is a 343-amino-acid chain: MLKTIALDAMGGDHGPKVIVPAALSILKKHPKVKLTLVGKEDQLALLIPEKNRKSFGQRLEIIHASEEVGMDEPPSQALRTKKNSSMRVAINLVKEGQAHACVSAGNTGALMATARYVLKTLPGIDRPAIIAAFPTKNEREVRVLDLGANVDSTPENLYQFAVMGSILSSAAHNIRNPRIGLLNVGEEEIKGNELVKKANELFETRKTINYIGYVEGNTIFNNIADVVVCDGFVGNAVLKASEGVAQLIKQHAKEAFSEAWWTKLALLPAIPILKRLIRRVDPERYNGATFLGLNGIVVKSHGSANIKAFVCAVEEAIFQVDKNIPQLIKEEVAHILKEFENK.

Belongs to the PlsX family. Homodimer. Probably interacts with PlsY.

It is found in the cytoplasm. The catalysed reaction is a fatty acyl-[ACP] + phosphate = an acyl phosphate + holo-[ACP]. The protein operates within lipid metabolism; phospholipid metabolism. Functionally, catalyzes the reversible formation of acyl-phosphate (acyl-PO(4)) from acyl-[acyl-carrier-protein] (acyl-ACP). This enzyme utilizes acyl-ACP as fatty acyl donor, but not acyl-CoA. The chain is Phosphate acyltransferase from Coxiella burnetii (strain CbuG_Q212) (Coxiella burnetii (strain Q212)).